We begin with the raw amino-acid sequence, 151 residues long: Differentiation-associated protein 2 (151 aa).

Positions 1 to 22 (MKQIIRLITTLLLLSLIGITCA) are cleaved as a signal peptide.

The protein resides in the endoplasmic reticulum. Its subcellular location is the vacuole. Has an essential role in the initiation of differentiation. Also required for cAMP signaling. The polypeptide is Differentiation-associated protein 2 (dia2) (Dictyostelium discoideum (Social amoeba)).